The chain runs to 171 residues: NADH-quinone oxidoreductase subunit B 2 (171 aa).

Residues Cys-37, Cys-38, Cys-102, and Cys-132 each coordinate [4Fe-4S] cluster.

Belongs to the complex I 20 kDa subunit family. As to quaternary structure, NDH-1 is composed of 14 different subunits. Subunits NuoB, C, D, E, F, and G constitute the peripheral sector of the complex. The cofactor is [4Fe-4S] cluster.

It is found in the cell inner membrane. It carries out the reaction a quinone + NADH + 5 H(+)(in) = a quinol + NAD(+) + 4 H(+)(out). Its function is as follows. NDH-1 shuttles electrons from NADH, via FMN and iron-sulfur (Fe-S) centers, to quinones in the respiratory chain. Couples the redox reaction to proton translocation (for every two electrons transferred, four hydrogen ions are translocated across the cytoplasmic membrane), and thus conserves the redox energy in a proton gradient. In Chromobacterium violaceum (strain ATCC 12472 / DSM 30191 / JCM 1249 / CCUG 213 / NBRC 12614 / NCIMB 9131 / NCTC 9757 / MK), this protein is NADH-quinone oxidoreductase subunit B 2.